A 655-amino-acid polypeptide reads, in one-letter code: Forkhead box protein O1 (655 aa).

Disordered stretches follow at residues methionine 1–alanine 63 and glycine 116–asparagine 158. At threonine 24 the chain carries Phosphothreonine; by PKB/AKT1 or PKB/AKT2 and SGK1. The span at serine 33–alanine 63 shows a compositional bias: low complexity. Residues proline 120–alanine 141 show a composition bias toward pro residues. The segment at residues alanine 159–serine 235 is a DNA-binding region (fork-head). DNA-binding stretches follow at residues asparagine 211–serine 218 and serine 234–tryptophan 237. Serine 212, serine 218, serine 234, and serine 235 each carry phosphoserine; by STK4/MST1. Positions serine 234–histidine 344 are disordered. Lysine 245 and lysine 248 each carry N6-acetyllysine. A Phosphoserine; by CDK1 modification is found at serine 249. 2 positions are modified to omega-N-methylarginine; by PRMT1: arginine 251 and arginine 253. The Nuclear localization signal signature appears at arginine 251–arginine 253. Serine 256 is subject to Phosphoserine; by PKB/AKT1 and SGK1. N6-acetyllysine occurs at positions 262, 265, and 274. The segment covering alanine 264–alanine 275 has biased composition (basic residues). The sufficient for interaction with NLK stretch occupies residues glycine 283 to glutamine 563. Residues serine 287 and serine 298 each carry the phosphoserine modification. The segment covering asparagine 309–glycine 326 has biased composition (polar residues). Serine 319 is modified (phosphoserine; by PKB/AKT1). Serine 322 carries the post-translational modification Phosphoserine; by CK1 and SGK1. Serine 325 is modified (phosphoserine; by CK1). Serine 329 bears the Phosphoserine; by DYRK1A mark. Position 333 is a phosphothreonine (threonine 333). A required for interaction with RUNX2 region spans residues serine 363–proline 459. Lysine 423 bears the N6-acetyllysine mark. The Required for interaction with SIRT1 motif lies at leucine 462 to leucine 466. Residues tyrosine 507 to valine 534 show a composition bias toward polar residues. The segment at tyrosine 507–arginine 537 is disordered.

Interacts with LRPPRC. Interacts with RUNX2; the interaction inhibits RUNX2 transcriptional activity and mediates the IGF1/insulin-dependent BGLAP expression in osteoblasts Interacts with PPP2R1A; the interaction regulates the dephosphorylation of FOXO1 at Thr-24 and Ser-256 leading to its nuclear import. Interacts (acetylated form) with PPARG. Interacts with XBP1 isoform 2; this interaction is direct and leads to FOXO1 ubiquitination and degradation via the proteasome pathway. Interacts with NLK. Interacts with SIRT1; the interaction results in the deacetylation of FOXO1 leading to activation of FOXO1-mediated transcription of genes involved in DNA repair and stress resistance. Binds to CDK1. Interacts with the 14-3-3 proteins, YWHAG and YWHAZ; the interactions require insulin-stimulated phosphorylation on Thr-24, promote nuclear exit and loss of transcriptional activity. Interacts with SKP2; the interaction ubiquitinates FOXO1 leading to its proteasomal degradation. The interaction requires the presence of KRIT1. Interacts (via the C-terminal half) with ATF4 (via its DNA-binding domain); the interaction occurs in osteoblasts, regulates glucose homeostasis via suppression of beta-cell proliferation and subsequent decrease in insulin production. Interacts with PRMT1; the interaction methylates FOXO1, prevents PKB/AKT1 phosphorylation and retains FOXO1 in the nucleus. Interacts with EP300 and CREBBP; the interactions acetylate FOXO1. Interacts with SIRT2; the interaction is disrupted in response to oxidative stress or serum deprivation, leading to increased level of acetylated FOXO1, which promotes stress-induced autophagy by stimulating E1-like activating enzyme ATG7. Interacts (acetylated form) with ATG7; the interaction is increased in response to oxidative stress or serum deprivation and promotes the autophagic process leading to cell death. Interacts (via the Fork-head domain) with CEBPA; the interaction increases when FOXO1 is deacetylated. Interacts with WDFY2. Forms a complex with WDFY2 and AKT1. Interacts with CRY1. Interacts with PPIA/CYPA; the interaction promotes FOXO1 dephosphorylation, nuclear accumulation and transcriptional activity. Interacts with TOX4; FOXO1 is required for full induction of TOX4-dependent activity and the interaction is inhibited by insulin. Interacts (when phosphorylated on Ser-256) with STUB1/CHIP. Phosphorylation by NLK promotes nuclear export and inhibits the transcriptional activity. In response to growth factors, phosphorylation on Thr-24, Ser-256 and Ser-322 by PKB/AKT1 promotes nuclear export and inactivation of transactivational activity. Phosphorylation on Thr-24 is required for binding 14-3-3 proteins. Phosphorylation of Ser-256 decreases DNA-binding activity and promotes the phosphorylation of Thr-24 and Ser-319, permitting phosphorylation of Ser-322 and Ser-325, probably by CDK1, leading to nuclear exclusion and loss of function. Stress signals, such as response to oxygen or nitric oxide, attenuate the PKB/AKT1-mediated phosphorylation leading to nuclear retention. Phosphorylation of Ser-329 is independent of IGF1 and leads to reduced function. Dephosphorylated on Thr-24 and Ser-256 by PP2A in beta-cells under oxidative stress leading to nuclear retention. Phosphorylation of Ser-249 by CDK1 disrupts binding of 14-3-3 proteins leading to nuclear accumulation and has no effect on DNA-binding nor transcriptional activity. Phosphorylation by STK4/MST1 on Ser-212, upon oxidative stress, inhibits binding to 14-3-3 proteins and nuclear export. PPIA/CYPA promotes its dephosphorylation on Ser-256. In terms of processing, ubiquitinated by SKP2. Ubiquitination leads to proteasomal degradation. Ubiquitinated by STUB1/CHIP; when Ser-256 is phosphorylated. Post-translationally, methylation inhibits AKT1-mediated phosphorylation at Ser-256 and is increased by oxidative stress. Acetylated. Acetylation at Lys-262, Lys-265 and Lys-274 are necessary for autophagic cell death induction. Deacetylated by SIRT2 in response to oxidative stress or serum deprivation, thereby negatively regulating FOXO1-mediated autophagic cell death. Once in the nucleus, acetylated by CREBBP/EP300. Acetylation diminishes the interaction with target DNA and attenuates the transcriptional activity. It increases the phosphorylation at Ser-256. Deacetylation by SIRT1 results in reactivation of the transcriptional activity. Oxidative stress by hydrogen peroxide treatment appears to promote deacetylation and uncoupling of insulin-induced phosphorylation. By contrast, resveratrol acts independently of acetylation. Acetylated at Lys-423, promoting its localization to the nucleus and transcription factor activity. Deacetylation at Lys-423 by SIRT6, promotes its translocation into the cytoplasm, preventing its transcription factor activity. Deacetylation and subsequent inhibition by SIRT6 has different effects depending on cell types: it inhibits gluconeogenesis in hepatocytes, promotes glucose sensing in pancreatic beta-cells and regulates lipid catabolism in brown adipocytes. As to expression, expressed in umbilical endothelial cells (at protein level). Abundantly expressed in skeletal muscle and ovary, with lower expression in the heart, placenta, lung, liver, pancreas, spleen, testis and small intestine. Weakly expressed in the brain, thymus, prostate and mucosal lining of the colon.

It is found in the cytoplasm. Its subcellular location is the nucleus. Transcription factor that is the main target of insulin signaling and regulates metabolic homeostasis in response to oxidative stress. Binds to the insulin response element (IRE) with consensus sequence 5'-TT[G/A]TTTTG-3' and the related Daf-16 family binding element (DBE) with consensus sequence 5'-TT[G/A]TTTAC-3'. Activity suppressed by insulin. Main regulator of redox balance and osteoblast numbers and controls bone mass. Orchestrates the endocrine function of the skeleton in regulating glucose metabolism. Also acts as a key regulator of chondrogenic commitment of skeletal progenitor cells in response to lipid availability: when lipids levels are low, translocates to the nucleus and promotes expression of SOX9, which induces chondrogenic commitment and suppresses fatty acid oxidation. Acts synergistically with ATF4 to suppress osteocalcin/BGLAP activity, increasing glucose levels and triggering glucose intolerance and insulin insensitivity. Also suppresses the transcriptional activity of RUNX2, an upstream activator of osteocalcin/BGLAP. Acts as an inhibitor of glucose sensing in pancreatic beta cells by acting as a transcription repressor and suppressing expression of PDX1. In hepatocytes, promotes gluconeogenesis by acting together with PPARGC1A and CEBPA to activate the expression of genes such as IGFBP1, G6PC1 and PCK1. Also promotes gluconeogenesis by directly promoting expression of PPARGC1A and G6PC1. Important regulator of cell death acting downstream of CDK1, PKB/AKT1 and STK4/MST1. Promotes neural cell death. Mediates insulin action on adipose tissue. Regulates the expression of adipogenic genes such as PPARG during preadipocyte differentiation and, adipocyte size and adipose tissue-specific gene expression in response to excessive calorie intake. Regulates the transcriptional activity of GADD45A and repair of nitric oxide-damaged DNA in beta-cells. Required for the autophagic cell death induction in response to starvation or oxidative stress in a transcription-independent manner. Mediates the function of MLIP in cardiomyocytes hypertrophy and cardiac remodeling. Positive regulator of apoptosis in cardiac smooth muscle cells as a result of its transcriptional activation of pro-apoptotic genes. Regulates endothelial cell (EC) viability and apoptosis in a PPIA/CYPA-dependent manner via transcription of CCL2 and BCL2L11 which are involved in EC chemotaxis and apoptosis. The polypeptide is Forkhead box protein O1 (Homo sapiens (Human)).